The chain runs to 509 residues: Activin receptor type-1 (509 aa).

The N-terminal stretch at 1–20 (MVDGAMILSVLMMMALPSPS) is a signal peptide. Residues 21–123 (MEDEEPKVNP…FPGSQNFHLE (103 aa)) are Extracellular-facing. Residue N102 is glycosylated (N-linked (GlcNAc...) asparagine). Residues 124-146 (VGLIILSVVFAVCLFACILGVAL) traverse the membrane as a helical segment. Over 147–509 (RKFKRRNQER…NSLDKLKTDC (363 aa)) the chain is Cytoplasmic. In terms of domain architecture, GS spans 178–207 (STLAELLDHSCTSGSGSGLPFLVQRTVARQ). The Protein kinase domain maps to 208–502 (ITLLECVGKG…KTLTKIDNSL (295 aa)). ATP contacts are provided by residues 214 to 222 (VGKGRYGEV) and K235. Catalysis depends on D336, which acts as the Proton acceptor. S501 carries the post-translational modification Phosphoserine.

It belongs to the protein kinase superfamily. TKL Ser/Thr protein kinase family. TGFB receptor subfamily. As to quaternary structure, interacts with FKBP1A. Interacts with FCHO1. Interacts with CLU. Interacts with type II receptors AMHR2 and ACVR2A. Interacts with BMP7. Interacts with GDF2/BMP9. Interacts with BMP6 (when glycosylated); the interaction may induce HAMP expression. Interacts with TSC22D1/TSC-22. The cofactor is Mg(2+). Mn(2+) serves as cofactor. Urogenital ridge, testis, ovary, brain and lungs.

Its subcellular location is the membrane. It carries out the reaction L-threonyl-[receptor-protein] + ATP = O-phospho-L-threonyl-[receptor-protein] + ADP + H(+). The enzyme catalyses L-seryl-[receptor-protein] + ATP = O-phospho-L-seryl-[receptor-protein] + ADP + H(+). In terms of biological role, bone morphogenetic protein (BMP) type I receptor that is involved in a wide variety of biological processes, including bone, heart, cartilage, nervous, and reproductive system development and regulation. As a type I receptor, forms heterotetrameric receptor complexes with the type II receptors AMHR2, ACVR2A ors ACVR2B. Upon binding of ligands such as BMP7 or GDF2/BMP9 to the heteromeric complexes, type II receptors transphosphorylate ACVR1 intracellular domain. In turn, ACVR1 kinase domain is activated and subsequently phosphorylates SMAD1/5/8 proteins that transduce the signal. In addition to its role in mediating BMP pathway-specific signaling, suppresses TGFbeta/activin pathway signaling by interfering with the binding of activin to its type II receptor. Besides canonical SMAD signaling, can activate non-canonical pathways such as p38 mitogen-activated protein kinases/MAPKs. May promote the expression of HAMP, potentially via its interaction with BMP6. In Rattus norvegicus (Rat), this protein is Activin receptor type-1 (Acvr1).